Consider the following 567-residue polypeptide: MNILNLKIIMFLLISNTIVVGGAWATSTCPDWPATRIAVEINALEQQLNKWSAAYHQQGHSPVTDDIYDQLQDKLRVWQSCRGLPDKTESQPIPGKGQFLHPVAHTGLKKLKDETALTRWMAGRKNLWVQPKVDGVAVTLVYHGGKLVQLLSRGNGVKGQNWTEKAPFISAIPQYIANAPALLTLQGELFLLMDGHQQAKSGGVNARSTVAGALMRKSPSPLLAQVGVFIWAWPDGPTTMKEKVALLQVMGFPFTAKYSEPVMSHLDVVQWRQFWFQAPLPFVTDGVVVRQEEEPAGRYWQATPGQWSMAWKYPPLQHIAEVKDIHFTLGRTGKGTVVLEVLPIKIDDKWIRRVNIGSVTRWKQWDIAPGDHITLALAGHGIPRLDNVVWRVHQRNTITAPNWDKFHQLSCFQRLPHGCEPQFLSRLIWLSGPGGLDIGGIGGGFWQELIHHELINDLVGWLLLTPEQIASIPGIGNARAEKIYQQFQRAKQQPFSRWLLALGFPQVVSVDAQWQVVLRRSLSEWATMAGIGQMRAKQIKHFLDHPDVQALADFLSTQKVVGFELTE.

Lys-132 (N6-AMP-lysine intermediate) is an active-site residue.

The protein belongs to the NAD-dependent DNA ligase family. LigB subfamily.

It carries out the reaction NAD(+) + (deoxyribonucleotide)n-3'-hydroxyl + 5'-phospho-(deoxyribonucleotide)m = (deoxyribonucleotide)n+m + AMP + beta-nicotinamide D-nucleotide.. Its function is as follows. Catalyzes the formation of phosphodiester linkages between 5'-phosphoryl and 3'-hydroxyl groups in double-stranded DNA using NAD as a coenzyme and as the energy source for the reaction. The sequence is that of DNA ligase B from Yersinia pestis.